The sequence spans 325 residues: GMP reductase (325 aa).

Catalysis depends on cysteine 174, which acts as the Thioimidate intermediate. Position 203-226 (203-226 (IIADGGIRTHGDIAKSIRFGATMV)) interacts with NADP(+).

Belongs to the IMPDH/GMPR family. GuaC type 2 subfamily.

It carries out the reaction IMP + NH4(+) + NADP(+) = GMP + NADPH + 2 H(+). Catalyzes the irreversible NADPH-dependent deamination of GMP to IMP. It functions in the conversion of nucleobase, nucleoside and nucleotide derivatives of G to A nucleotides, and in maintaining the intracellular balance of A and G nucleotides. The chain is GMP reductase from Helicobacter pylori (strain J99 / ATCC 700824) (Campylobacter pylori J99).